Reading from the N-terminus, the 367-residue chain is 2-aminoethylphosphonate--pyruvate transaminase (367 aa).

Position 193 is an N6-(pyridoxal phosphate)lysine (lysine 193).

The protein belongs to the class-V pyridoxal-phosphate-dependent aminotransferase family. PhnW subfamily. Homodimer. Requires pyridoxal 5'-phosphate as cofactor.

It catalyses the reaction (2-aminoethyl)phosphonate + pyruvate = phosphonoacetaldehyde + L-alanine. Functionally, involved in phosphonate degradation. The polypeptide is 2-aminoethylphosphonate--pyruvate transaminase (Vibrio cholerae serotype O1 (strain ATCC 39541 / Classical Ogawa 395 / O395)).